A 192-amino-acid chain; its full sequence is Adenine phosphoribosyltransferase 2 (192 aa).

It belongs to the purine/pyrimidine phosphoribosyltransferase family. Homodimer.

The protein resides in the cytoplasm. It carries out the reaction AMP + diphosphate = 5-phospho-alpha-D-ribose 1-diphosphate + adenine. Its pathway is purine metabolism; AMP biosynthesis via salvage pathway; AMP from adenine: step 1/1. In terms of biological role, catalyzes a salvage reaction resulting in the formation of AMP, that is energically less costly than de novo synthesis. May contribute to the recycling of adenine into adenylate nucleotides and the inactivation of cytokinins by phosphoribosylation. Possesses low activity toward adenine and cytokinins. This Arabidopsis thaliana (Mouse-ear cress) protein is Adenine phosphoribosyltransferase 2 (APT2).